The chain runs to 866 residues: Dynamin-2 (866 aa).

The region spanning 28–294 is the Dynamin-type G domain; sequence HLDLPQIAVV…LTNHIRESLP (267 aa). A G1 motif region spans residues 38–45; that stretch reads GGQSAGKS. Residues serine 41, glycine 43, lysine 44, serine 45, serine 46, arginine 59, and glycine 60 each contribute to the GDP site. Residues 64–66 form a G2 motif region; it reads VTR. The G3 motif stretch occupies residues 136–139; the sequence is DLPG. Positions 205–208 are G4 motif; that stretch reads TKLD. GDP is bound by residues lysine 206, aspartate 208, and aspartate 211. At tyrosine 231 the chain carries Phosphotyrosine. The segment at 235-238 is G5 motif; it reads VNRS. Residues asparagine 236, arginine 237, and glutamine 239 each contribute to the GDP site. Lysine 299 carries the N6-acetyllysine modification. In terms of domain architecture, PH spans 515–621; that stretch reads QVIRRGWLTI…WKASFLRAGV (107 aa). At tyrosine 593 the chain carries Phosphotyrosine. Residue lysine 594 is modified to N6-acetyllysine. The 92-residue stretch at 649 to 740 folds into the GED domain; it reads VETIRNLVDS…IIGDISTSTV (92 aa). The disordered stretch occupies residues 737-866; it reads TSTVSTPVPP…IRPAEPSLLD (130 aa). Threonine 751 is modified (phosphothreonine). The segment covering 752–763 has biased composition (polar residues); that stretch reads WIQNTSSHSPTP. Serine 760 is modified (phosphoserine; by CDK1). Pro residues-rich tracts occupy residues 784–794, 802–811, and 822–851; these read TPGPPLIPVPV, PPIPSRPGPH, and SAPP…PAAP.

It belongs to the TRAFAC class dynamin-like GTPase superfamily. Dynamin/Fzo/YdjA family. Oligomerizes into a helical polymer that self-assembles around the vesicle membrane, when associated to the menbrane through lipid binding. Interacts with SHANK1 and SHANK2. Interacts with SNX9. Interacts (via C-terminal proline-rich domain (PRD)) with SNX18 (via SH3 domain); this interaction regulates ATG9A and ATG16L1 trafficking from recycling endosomes to sites of autophagosome formation. Interacts with SNX33 (via SH3 domain). Interacts with MYO1E (via SH3 domain). Interacts with PSTPIP1 (via SH3 domain). Interacts with CTNND2. Interacts (via C-terminal proline-rich domain (PRD)) with BIN1 (via SH3 domain); this interaction allows the recruitment of DNM2 to the membrane tubules and inhibits self-assembly-stimulated GTPase activity on the membrane. Interacts with GABARAP, GABARAPL1 and GABARAPL2. Interacts with MAP1LC3B (the lipidate and non-lipidated LC3 form); this interaction mediates recycling endosome scission leading to autophagosome release. Interacts with ITSN1. Interacts with MYOF. Interacts (via C-terminal proline-rich domain (PRD)) with SH3BP4 (via SH3 domain); this interaction controls the GTPase activity and is prevented by EGFR-induced tyrosine phosphorylation of either DNM2 or SH3BP4. May interact with PIK3C3. May be a component of a complex composed of RAB5A (in GDP-bound form), DYN2 and PIK3C3. Interacts with SDC4; this interaction is markedly enhanced at focal ahesion site upon induction of focal adhesions and stress-fiber formation. Interacts with ACTN1. Interacts with CTTN; this interaction stimulates the intrinsic GTPase activity of DNM2 and stabilizes the association of DNM2 and actin filaments; in addition this interaction is stimulated by ligand binding to the receptor, leading to the recruitment of the DNM2-CTTN complex to the sequestered receptor-ligand complex to its internalization. Interacts with NOSTRIN (via SH3 domain); this interaction allows the recruitment of NOS3 to dynamin-positive structures. Interacts with TUBG1; this interaction may participate in centrosome cohesion. In terms of processing, phosphorylation at Ser-844 by GSK3-alpha relieves the inhibition of BIN1 and promotes endocytosis. Phosphorylation at Ser-760 by CDK1 is greatly increased upon mitotic entry. It regulates cytokinesis downstream of calcineurin, and does not affect clathrin-mediated endocytosis. Dephosphorylated by calcineurin/PP2 during cytokinesis in a Ca(2+)- and calmodulin-dependent manner. Phosphorylated on tyrosine residues by EGFR and after activation of SRC.

The protein resides in the cytoplasm. Its subcellular location is the cytoskeleton. It is found in the cytoplasmic vesicle. The protein localises to the clathrin-coated vesicle. It localises to the cell projection. The protein resides in the uropodium. Its subcellular location is the endosome. It is found in the microtubule organizing center. The protein localises to the centrosome. It localises to the centriole. The protein resides in the recycling endosome. Its subcellular location is the phagocytic cup. It is found in the phagosome membrane. The protein localises to the podosome. It localises to the cell junction. The protein resides in the postsynaptic density. Its subcellular location is the synapse. It is found in the synaptosome. The protein localises to the midbody. It localises to the membrane. The protein resides in the clathrin-coated pit. It carries out the reaction GTP + H2O = GDP + phosphate + H(+). In terms of biological role, catalyzes the hydrolysis of GTP and utilizes this energy to mediate vesicle scission at plasma membrane during endocytosis and filament remodeling at many actin structures during organization of the actin cytoskeleton. Plays an important role in vesicular trafficking processes, namely clathrin-mediated endocytosis (CME), exocytic and clathrin-coated vesicle from the trans-Golgi network, and PDGF stimulated macropinocytosis. During vesicular trafficking process, associates to the membrane, through lipid binding, and self-assembles into ring-like structure through oligomerization to form a helical polymer around the vesicle membrane and leading to vesicle scission. Plays a role in organization of the actin cytoskeleton by mediating arrangement of stress fibers and actin bundles in podocytes. During organization of the actin cytoskeleton, self-assembles into ring-like structure that directly bundles actin filaments to form typical membrane tubules decorated with dynamin spiral polymers. Self-assembly increases GTPase activity and the GTP hydrolysis causes the rapid depolymerization of dynamin spiral polymers, and results in dispersion of actin bundles. Remodels, through its interaction with CTTN, bundled actin filaments in a GTPase-dependent manner and plays a role in orchestrating the global actomyosin cytoskeleton. The interaction with CTTN stabilizes the interaction of DNM2 and actin filaments and stimulates the intrinsic GTPase activity that results in actin filament-barbed ends and increases the sensitivity of filaments in bundles to the actin depolymerizing factor, CFL1. Plays a role in the autophagy process, by participating in the formation of ATG9A vesicles destined for the autophagosomes through its interaction with SNX18, by mediating recycling endosome scission leading to autophagosome release through MAP1LC3B interaction. Also regulates maturation of apoptotic cell corpse-containing phagosomes by recruiting PIK3C3 to the phagosome membrane. Also plays a role in cytokinesis. May participate in centrosome cohesion through its interaction with TUBG1. Plays a role in the regulation of neuron morphology, axon growth and formation of neuronal growth cones. Involved in membrane tubulation. This is Dynamin-2 from Bos taurus (Bovine).